Here is a 193-residue protein sequence, read N- to C-terminus: dTTP/UTP pyrophosphatase (193 aa).

Asp68 functions as the Proton acceptor in the catalytic mechanism.

This sequence belongs to the Maf family. YhdE subfamily. A divalent metal cation serves as cofactor.

It is found in the cytoplasm. The catalysed reaction is dTTP + H2O = dTMP + diphosphate + H(+). It catalyses the reaction UTP + H2O = UMP + diphosphate + H(+). Its function is as follows. Nucleoside triphosphate pyrophosphatase that hydrolyzes dTTP and UTP. May have a dual role in cell division arrest and in preventing the incorporation of modified nucleotides into cellular nucleic acids. The polypeptide is dTTP/UTP pyrophosphatase (Ruegeria sp. (strain TM1040) (Silicibacter sp.)).